The sequence spans 623 residues: Leucine aminopeptidase 2 (623 aa).

Residues 136-138 (QCQ) and 273-278 (PYGGME) contribute to the a peptide site. Residue H302 participates in Zn(2+) binding. Catalysis depends on E303, which acts as the Proton acceptor. Positions 306 and 325 each coordinate Zn(2+). The Proton donor role is filled by Y390.

This sequence belongs to the peptidase M1 family. Zn(2+) serves as cofactor.

The protein resides in the cytoplasm. It localises to the nucleus. It catalyses the reaction an epoxide + H2O = an ethanediol. In terms of biological role, aminopeptidase that preferentially cleaves di- and tripeptides. Also has low epoxide hydrolase activity (in vitro). Can hydrolyze the epoxide leukotriene LTA(4) but it forms preferentially 5,6-dihydroxy-7,9,11,14-eicosatetraenoic acid rather than the cytokine leukotriene B(4) as the product compared to the homologous mammalian enzyme (in vitro). This chain is Leucine aminopeptidase 2, found in Phaeosphaeria nodorum (strain SN15 / ATCC MYA-4574 / FGSC 10173) (Glume blotch fungus).